The following is a 60-amino-acid chain: Large ribosomal subunit protein bL32 (60 aa).

Residues 1-60 (MAVQQVKKSRSKRDIRRSHDSLTNPTLSTDKSTGELHLRHHVSPNGFYKGRKVVDTKSED) form a disordered region. Over residues 7 to 16 (KKSRSKRDIR) the composition is skewed to basic residues. The span at 22–31 (LTNPTLSTDK) shows a compositional bias: polar residues.

Belongs to the bacterial ribosomal protein bL32 family.

This chain is Large ribosomal subunit protein bL32, found in Francisella tularensis subsp. tularensis (strain SCHU S4 / Schu 4).